The chain runs to 981 residues: Colossin-C (981 aa).

Residues 1–23 (MKILYSLLLISSIILNTVLNISS) form the signal peptide. Asparagine 63 carries N-linked (GlcNAc...) asparagine glycosylation. Residues 172-195 (EQTQPPTQPPTQPPTQPPTPPPFT) form a disordered region. A compositionally biased stretch (pro residues) spans 177–194 (PTQPPTQPPTQPPTPPPF). Asparagine 222, asparagine 591, and asparagine 811 each carry an N-linked (GlcNAc...) asparagine glycan.

The protein belongs to the serine-aspartate repeat-containing protein (SDr) family.

It localises to the secreted. The protein is Colossin-C (colC) of Dictyostelium discoideum (Social amoeba).